Here is a 152-residue protein sequence, read N- to C-terminus: Transcriptional regulator MraZ (152 aa).

2 SpoVT-AbrB domains span residues 5 to 52 and 81 to 124; these read INAI…TAAQ and ATDV…NKEL.

Belongs to the MraZ family. Forms oligomers.

The protein resides in the cytoplasm. The protein localises to the nucleoid. This is Transcriptional regulator MraZ from Legionella pneumophila (strain Paris).